The primary structure comprises 455 residues: N-acetyl-S-(2-succino)cysteine lyase (455 aa).

106–107 (TT) contributes to the fumarate binding site. Histidine 154 (proton donor/acceptor) is an active-site residue. Arginine 233 lines the fumarate pocket. Serine 277 functions as the Proton donor/acceptor in the catalytic mechanism. Fumarate contacts are provided by residues serine 278 and 283 to 285 (KRN).

The protein belongs to the lyase 1 family.

The catalysed reaction is N-acetyl-S-(2-succino)-L-cysteine = N-acetyl-L-cysteine + fumarate. The protein operates within amino-acid biosynthesis; L-cysteine biosynthesis. Functionally, catalyzes the cleavage of N-acetyl-S-(2-succino)cysteine into fumarate and N-acetylcysteine. Is involved in a S-(2-succino)cysteine (2SC) degradation pathway that allows the bacterium to recover cysteine from 2SC and to detoxify 2SC that may be a toxic metabolite. Can also perform the reverse reaction in vitro, and has minor activity against 2SC and other small molecule thiols. This chain is N-acetyl-S-(2-succino)cysteine lyase, found in Enterococcus italicus (strain DSM 15952 / CCUG 50447 / LMG 22039 / TP 1.5).